Here is a 69-residue protein sequence, read N- to C-terminus: Conopeptide Y-Pl1 (69 aa).

A signal peptide spans 1–20 (MSKLGVVLFVFLLLLPLAAP). Positions 21–69 (QPVGDQPADQPADRNAEARARFLHPFQYYTLYRYLTRFLHRYPIYYIRY) are excised as a propeptide.

This sequence belongs to the conotoxin M superfamily. Conopeptide Y family. As to expression, expressed by the venom duct.

The protein resides in the secreted. Its function is as follows. Tyrosine-rich conopeptide that targets several channels/receptors that are expressed in Xenopus oocytes. These targets are the voltage-gated potassium channels Kv1.6/KCNA6 (IC(50) is 170 nM) and Kv1.2/KCNA2 (IC(50) is 2.0 uM), Nav1.2/SCN2A (30% of inhibition), and N-methyl-D-aspartate (NMDA) receptor (GRIN1/GRIN2A/GRIN3B and GRIN1/GRIN2B/GRIN3B) (15% of inhibition). In vivo, causes the marine worm N.virens to move very slowly in contrast to control worms, and causes seizures (at 5 nmol) and death (20 nmol) to mice when intracranially injected. In Conus planorbis (Planorbis cone), this protein is Conopeptide Y-Pl1.